Consider the following 209-residue polypeptide: Kynurenine formamidase (209 aa).

Trp20 lines the substrate pocket. 3 residues coordinate Zn(2+): His50, His54, and Asp56. His60 serves as the catalytic Proton donor/acceptor. Zn(2+) contacts are provided by His161 and Glu173.

Belongs to the Cyclase 1 superfamily. KynB family. Homodimer. The cofactor is Zn(2+).

The enzyme catalyses N-formyl-L-kynurenine + H2O = L-kynurenine + formate + H(+). The protein operates within amino-acid degradation; L-tryptophan degradation via kynurenine pathway; L-kynurenine from L-tryptophan: step 2/2. In terms of biological role, catalyzes the hydrolysis of N-formyl-L-kynurenine to L-kynurenine, the second step in the kynurenine pathway of tryptophan degradation. This is Kynurenine formamidase from Bacillus thuringiensis subsp. konkukian (strain 97-27).